The following is a 90-amino-acid chain: Bombyxin B-5 (90 aa).

Positions 1–20 (MMKTAVMFILVVVISLTYSS) are cleaved as a signal peptide. Disulfide bonds link C30/C75, C42/C88, and C74/C79. Residues 49–64 (GGAQYAPYWQETYLRS) constitute a propeptide, c peptide like.

The protein belongs to the insulin family. Heterodimer of a B chain and an A chain linked by two disulfide bonds.

It localises to the secreted. Functionally, brain peptide responsible for activation of prothoracic glands to produce ecdysone in insects. This chain is Bombyxin B-5 (BBXB5), found in Bombyx mori (Silk moth).